Here is a 526-residue protein sequence, read N- to C-terminus: Tyrosine-protein kinase transforming protein Src (526 aa).

Residues 1 to 57 form a disordered region; the sequence is MGSSKSKPKDPSQRRRSLEPPDSTHHGGFPASQTPNKTAAPDTHRTPSRSFGTVATE. G2 is lipidated: N-myristoyl glycine; by host. Residues 7–25 are compositionally biased toward basic and acidic residues; sequence KPKDPSQRRRSLEPPDSTH. In terms of domain architecture, SH3 spans 81–142; that stretch reads GGVTTFVALY…PSNYVAPSDS (62 aa). Residues 148–245 enclose the SH2 domain; the sequence is WYFGKITRRE…GLCHRLTNVC (98 aa). Positions 267–517 constitute a Protein kinase domain; it reads LRLEVKLGQG…TFEYLQAQLL (251 aa). Residues 273–281 and K295 contribute to the ATP site; that span reads LGQGCFGEV. Catalysis depends on D386, which acts as the Proton acceptor. Y416 is subject to Phosphotyrosine; by autocatalysis.

It belongs to the protein kinase superfamily. Tyr protein kinase family. SRC subfamily. In terms of assembly, homodimer. In terms of processing, the phosphorylated form is termed pp60v-src.

The catalysed reaction is L-tyrosyl-[protein] + ATP = O-phospho-L-tyrosyl-[protein] + ADP + H(+). Functionally, this phosphoprotein, required for both the initiation and the maintenance of neoplastic transformation, is a protein kinase that catalyzes the phosphorylation of tyrosine residues in vitro. Causes mitotic slippage in addition to cytokinesis failure in the host cell. Phosphorylates and attenuates the activity of host CDK1, possibly causing the mitotic slippage. This chain is Tyrosine-protein kinase transforming protein Src (V-SRC), found in Rous sarcoma virus subgroup A (strain Schmidt-Ruppin) (RSV-SR-A).